We begin with the raw amino-acid sequence, 848 residues long: Aryl hydrocarbon receptor (848 aa).

Positions 1-9 (MSSGANITY) are excised as a propeptide. The segment at 1 to 38 (MSSGANITYASRKRRKPVQKTVKPIPAEGIKSNPSKRH) is disordered. 2 consecutive short sequence motifs (nuclear localization signal) follow at residues 12 to 15 (RKRR) and 36 to 41 (KRHRDR). The bHLH domain occupies 26–79 (PAEGIKSNPSKRHRDRLNTELDRLASLLPFPQDVINKLDKLSVLRLSVSYLRAK). Residues 37 to 65 (RHRDRLNTELDRLASLLPFPQDVINKLDK) are DNA-binding. Required for maintaining the overall integrity of the AHR:ARNT heterodimer and its transcriptional activity regions lie at residues 49–81 (LASL…AKSF), 116–124 (LLQALNGFV), and 260–262 (FAI). The Nuclear export signal motif lies at 63–71 (LDKLSVLRL). The 65-residue stretch at 111-175 (QEGEFLLQAL…AEFQRQLHWA (65 aa)) folds into the PAS 1 domain. The PAS 2 domain maps to 266-336 (LQPPSILEIR…CAESHIRMIK (71 aa)). A PAC domain is found at 342–383 (MTVFRLLAKHSRWRWVQSNARLIYRNGRPDYIIVTQRPLTDE). Residues 421–449 (LPIRTKSNTSRKDWAPQSTPSKDSFHPSS) are disordered. Residues 436 to 449 (PQSTPSKDSFHPSS) show a composition bias toward polar residues.

As to quaternary structure, homodimer. Heterodimer; efficient DNA binding requires dimerization with another bHLH protein. Interacts with ARNT; the heterodimer ARNT:AHR binds to core DNA sequence 5'-TGCGTG-3' within the dioxin response element (DRE) of target gene promoters and activates their transcription. Binds MYBBP1A. Interacts with coactivators including SRC-1, RIP140 and NOCA7, and with the corepressor SMRT. Interacts with NEDD8 and IVNS1ABP. Interacts with BMAL1. Interacts with HSP90AB1. Interacts with TIPARP; leading to mono-ADP-ribosylation of AHR and subsequent inhibition of AHR. In terms of processing, mono-ADP-ribosylated, leading to inhibit transcription activator activity of AHR.

Its subcellular location is the cytoplasm. The protein resides in the nucleus. Ligand-activated transcription factor that enables cells to adapt to changing conditions by sensing compounds from the environment, diet, microbiome and cellular metabolism, and which plays important roles in development, immunity and cancer. Upon ligand binding, translocates into the nucleus, where it heterodimerizes with ARNT and induces transcription by binding to xenobiotic response elements (XRE). Regulates a variety of biological processes, including angiogenesis, hematopoiesis, drug and lipid metabolism, cell motility and immune modulation. Xenobiotics can act as ligands: upon xenobiotic-binding, activates the expression of multiple phase I and II xenobiotic chemical metabolizing enzyme genes (such as the CYP1A1 gene). Mediates biochemical and toxic effects of halogenated aromatic hydrocarbons. Next to xenobiotics, natural ligands derived from plants, microbiota, and endogenous metabolism are potent AHR agonists. Tryptophan (Trp) derivatives constitute an important class of endogenous AHR ligands. Acts as a negative regulator of anti-tumor immunity: indoles and kynurenic acid generated by Trp catabolism act as ligand and activate AHR, thereby promoting AHR-driven cancer cell motility and suppressing adaptive immunity. Regulates the circadian clock by inhibiting the basal and circadian expression of the core circadian component PER1. Inhibits PER1 by repressing the CLOCK-BMAL1 heterodimer mediated transcriptional activation of PER1. The heterodimer ARNT:AHR binds to core DNA sequence 5'-TGCGTG-3' within the dioxin response element (DRE) of target gene promoters and activates their transcription. The protein is Aryl hydrocarbon receptor (Ahr) of Mus musculus castaneus (Southeastern Asian house mouse).